The chain runs to 242 residues: Zinc import ATP-binding protein ZnuC (242 aa).

An ABC transporter domain is found at 24–241; it reads INVKDLSFAY…EKFLKMFSSY (218 aa). 56-63 is a binding site for ATP; that stretch reads GPNGGGKT.

This sequence belongs to the ABC transporter superfamily. Zinc importer (TC 3.A.1.15.5) family. In terms of assembly, the complex is composed of two ATP-binding proteins (ZnuC), two transmembrane proteins (ZnuB) and a solute-binding protein (ZnuA).

The protein resides in the cell inner membrane. It carries out the reaction Zn(2+)(out) + ATP(in) + H2O(in) = Zn(2+)(in) + ADP(in) + phosphate(in) + H(+)(in). Part of the ABC transporter complex ZnuABC involved in zinc import. Responsible for energy coupling to the transport system. The protein is Zinc import ATP-binding protein ZnuC of Ehrlichia ruminantium (strain Gardel).